A 582-amino-acid polypeptide reads, in one-letter code: Hydrazine dehydrogenase (582 aa).

Positions 1–32 are cleaved as a signal peptide; the sequence is MRKFLKVTLASALIGCGVIGTVSSLMVKEAKA. 32 residues coordinate heme c: cysteine 121, cysteine 124, histidine 125, histidine 141, cysteine 151, cysteine 154, histidine 155, histidine 159, cysteine 170, cysteine 175, histidine 176, histidine 191, cysteine 216, cysteine 219, histidine 220, cysteine 227, cysteine 230, histidine 231, histidine 234, cysteine 247, cysteine 250, histidine 251, histidine 267, cysteine 297, cysteine 300, histidine 301, histidine 306, cysteine 342, cysteine 345, histidine 346, histidine 454, and tyrosine 462. Residues 561 to 582 form a disordered region; sequence GSHSAHHHESGHDPAARSMKEH. Positions 567–582 are enriched in basic and acidic residues; the sequence is HHESGHDPAARSMKEH.

In terms of assembly, homotrimer; subunits are linked by two covalent bonds between Tyr-462 of one subunit and heme P460 of an adjacent subunit. May form 24-mer of an octamer of trimers. Heme c is required as a cofactor.

The protein resides in the anammoxosome. It carries out the reaction hydrazine + 4 Fe(III)-[cytochrome c] = N2 + 4 Fe(II)-[cytochrome c] + 4 H(+). It participates in nitrogen metabolism. Is strongly and competitively inhibited by NO and hydroxylamine. In terms of biological role, catalyzes the four-electron oxidation of hydrazine to N2. The electrons derived from hydrazine oxidation may be transferred to the quinone pool and exploited to promote the generation of proton-motive force (pmf) across the anammoxosome membrane. Is involved in anaerobic ammonium oxidation (anammox), a biological process in which nitrite is used as the electron acceptor in the conversion of ammonium to dinitrogen gas (N2) and water; this bacterial process has a major role in the Earth's nitrogen cycle and has been estimated to synthesize up to 50% of the dinitrogen gas emitted into our atmosphere from the oceans. Cannot oxidize hydroxylamine to NO. This chain is Hydrazine dehydrogenase, found in Kuenenia stuttgartiensis.